The sequence spans 156 residues: Small ribosomal subunit protein eS10 (156 aa).

The interval 91–156 (LKRQTRPEAA…FGRGRQEQEE (66 aa)) is disordered. A compositionally biased stretch (basic and acidic residues) spans 95–119 (TRPEAARPRPKEGAPRAQVGEDRAG).

This sequence belongs to the eukaryotic ribosomal protein eS10 family.

Its subcellular location is the cytoplasm. The protein is Small ribosomal subunit protein eS10 (RPS10) of Lumbricus rubellus (Humus earthworm).